The primary structure comprises 178 residues: Napin-B (178 aa).

The N-terminal stretch at 1–21 (MANKLFLVSATLAFFFLLTNA) is a signal peptide. 2 propeptides span residues 22-38 (SIYR…ATNP) and 75-94 (PSWT…NPQG).

It belongs to the 2S seed storage albumins family. In terms of assembly, the mature protein consists of a small and a large chain linked by disulfide bonds. In terms of tissue distribution, cotyledons and the axis.

In terms of biological role, the small, basic, water-soluble napins are one of the two major kinds of storage proteins synthesized in the seed during its maturation. This chain is Napin-B (NAPB), found in Brassica napus (Rape).